The sequence spans 378 residues: Probable cytochrome oxidase subunit 2 (378 aa).

The Cytoplasmic segment spans residues 1–8 (MIDYEFLR). Residues 9–28 (FIWWVLVIVLLIGFSVTDGF) traverse the membrane as a helical segment. At 29 to 79 (DMGVTALLPVIGKKEVERRIMINTIAPHWDGNQVWLLTAGGAIFAAWPIVY) the chain is on the periplasmic side. Residues 80-99 (AVSFSGFYIALVLVLAALFL) traverse the membrane as a helical segment. The Cytoplasmic portion of the chain corresponds to 100–122 (RPLGFEYRAKIDNPTWRSVWDWG). Residues 123 to 142 (LFAGGFVPALVFGVAFGNLL) form a helical membrane-spanning segment. Residues 143–164 (QGVPFHFNELTQVTYTGSFFEL) are Periplasmic-facing. A helical transmembrane segment spans residues 165 to 184 (LNPFALLCGVISLSMLVTHG). The Cytoplasmic portion of the chain corresponds to 185–205 (ANWLQMKTTEALRDRARTVSQ). A helical transmembrane segment spans residues 206 to 224 (IGSIVTLIAFVLAGVWLYS). Residues 225 to 261 (KDGYVVTSTIDHFAPSSPMNKEVAVETGAWFRNFNEM) are Periplasmic-facing. Residues 262-281 (PILWIFPALAVVAALLNAAF) traverse the membrane as a helical segment. Residues 282 to 291 (SKANRCGFAF) are Cytoplasmic-facing. The chain crosses the membrane as a helical span at residues 292 to 311 (FFSALTMAGVIITAAVSMFP). At 312–335 (FVMPSSSHPEQSLLMWDSTSSELT) the chain is on the periplasmic side. Residues 336–355 (LTLMLIFAVVFVVIALAYTI) traverse the membrane as a helical segment. Residues 356–378 (WSYSKMFGRLDANFIDKNKHSLY) are Cytoplasmic-facing.

This sequence belongs to the cytochrome ubiquinol oxidase subunit 2 family. As to quaternary structure, heterodimer of subunits I and II.

The protein resides in the cell inner membrane. Functionally, probable cytochrome oxidase subunit. The chain is Probable cytochrome oxidase subunit 2 from Haemophilus influenzae (strain ATCC 51907 / DSM 11121 / KW20 / Rd).